A 74-amino-acid polypeptide reads, in one-letter code: Anionic peptide clone 10 (74 aa).

Residues 1–24 (MVSKSLIVLLLVSVLVSTFFTTEA) form the signal peptide.

Belongs to the non-disulfide-bridged peptide (NDBP) superfamily. Long chain multifunctional peptide (group 2) family. Expressed by the venom gland.

The protein resides in the secreted. In terms of biological role, may be an antimicrobial peptide. The chain is Anionic peptide clone 10 from Tityus costatus (Brazilian scorpion).